A 230-amino-acid polypeptide reads, in one-letter code: Small ribosomal subunit protein uS3 (230 aa).

One can recognise a KH type-2 domain in the interval 39–107; sequence VRKFLVEKLQ…PAQINIAEIR (69 aa).

This sequence belongs to the universal ribosomal protein uS3 family. As to quaternary structure, part of the 30S ribosomal subunit. Forms a tight complex with proteins S10 and S14.

Its function is as follows. Binds the lower part of the 30S subunit head. Binds mRNA in the 70S ribosome, positioning it for translation. This is Small ribosomal subunit protein uS3 from Shewanella baltica (strain OS223).